The following is a 247-amino-acid chain: uncharacterized protein (247 aa).

NAD(+) is bound by residues Leu19, Asp38, Asp63, and Val64. Ser142 is a substrate binding site. Residues Tyr155, Lys159, and Ser190 each contribute to the NAD(+) site. Residue Tyr155 is the Proton acceptor of the active site.

The protein belongs to the short-chain dehydrogenases/reductases (SDR) family.

This is an uncharacterized protein from Mycobacterium bovis (strain ATCC BAA-935 / AF2122/97).